The primary structure comprises 321 residues: Lipoyl synthase (321 aa).

7 residues coordinate [4Fe-4S] cluster: C60, C65, C71, C86, C90, C93, and S299. The region spanning W72–L288 is the Radical SAM core domain.

It belongs to the radical SAM superfamily. Lipoyl synthase family. [4Fe-4S] cluster serves as cofactor.

The protein localises to the cytoplasm. The enzyme catalyses [[Fe-S] cluster scaffold protein carrying a second [4Fe-4S](2+) cluster] + N(6)-octanoyl-L-lysyl-[protein] + 2 oxidized [2Fe-2S]-[ferredoxin] + 2 S-adenosyl-L-methionine + 4 H(+) = [[Fe-S] cluster scaffold protein] + N(6)-[(R)-dihydrolipoyl]-L-lysyl-[protein] + 4 Fe(3+) + 2 hydrogen sulfide + 2 5'-deoxyadenosine + 2 L-methionine + 2 reduced [2Fe-2S]-[ferredoxin]. The protein operates within protein modification; protein lipoylation via endogenous pathway; protein N(6)-(lipoyl)lysine from octanoyl-[acyl-carrier-protein]: step 2/2. Functionally, catalyzes the radical-mediated insertion of two sulfur atoms into the C-6 and C-8 positions of the octanoyl moiety bound to the lipoyl domains of lipoate-dependent enzymes, thereby converting the octanoylated domains into lipoylated derivatives. The sequence is that of Lipoyl synthase from Mesorhizobium japonicum (strain LMG 29417 / CECT 9101 / MAFF 303099) (Mesorhizobium loti (strain MAFF 303099)).